The following is a 373-amino-acid chain: Dual-specificity RNA methyltransferase RlmN (373 aa).

Glu-104 serves as the catalytic Proton acceptor. The 240-residue stretch at 110-349 folds into the Radical SAM core domain; sequence KNQRTTLCIS…VTIRKIRGYD (240 aa). The cysteines at positions 117 and 354 are disulfide-linked. [4Fe-4S] cluster is bound by residues Cys-124, Cys-128, and Cys-131. Residues 178 to 179, Ser-210, 232 to 234, and Asn-311 each bind S-adenosyl-L-methionine; these read GE and SLH. The S-methylcysteine intermediate role is filled by Cys-354.

The protein belongs to the radical SAM superfamily. RlmN family. The cofactor is [4Fe-4S] cluster.

Its subcellular location is the cytoplasm. It catalyses the reaction adenosine(2503) in 23S rRNA + 2 reduced [2Fe-2S]-[ferredoxin] + 2 S-adenosyl-L-methionine = 2-methyladenosine(2503) in 23S rRNA + 5'-deoxyadenosine + L-methionine + 2 oxidized [2Fe-2S]-[ferredoxin] + S-adenosyl-L-homocysteine. The enzyme catalyses adenosine(37) in tRNA + 2 reduced [2Fe-2S]-[ferredoxin] + 2 S-adenosyl-L-methionine = 2-methyladenosine(37) in tRNA + 5'-deoxyadenosine + L-methionine + 2 oxidized [2Fe-2S]-[ferredoxin] + S-adenosyl-L-homocysteine. Functionally, specifically methylates position 2 of adenine 2503 in 23S rRNA and position 2 of adenine 37 in tRNAs. m2A2503 modification seems to play a crucial role in the proofreading step occurring at the peptidyl transferase center and thus would serve to optimize ribosomal fidelity. This chain is Dual-specificity RNA methyltransferase RlmN, found in Buchnera aphidicola subsp. Baizongia pistaciae (strain Bp).